The chain runs to 696 residues: DNA ligase (696 aa).

Residues 43–47 (DGEFD), 92–93 (SL), and glutamate 122 contribute to the NAD(+) site. Catalysis depends on lysine 124, which acts as the N6-AMP-lysine intermediate. Positions 145, 185, 301, and 325 each coordinate NAD(+). The Zn(2+) site is built by cysteine 419, cysteine 422, cysteine 438, and cysteine 444. Positions 608-696 (SIPRNLEGLS…GPDAVAESGV (89 aa)) constitute a BRCT domain.

Belongs to the NAD-dependent DNA ligase family. LigA subfamily. Requires Mg(2+) as cofactor. It depends on Mn(2+) as a cofactor.

The catalysed reaction is NAD(+) + (deoxyribonucleotide)n-3'-hydroxyl + 5'-phospho-(deoxyribonucleotide)m = (deoxyribonucleotide)n+m + AMP + beta-nicotinamide D-nucleotide.. Its function is as follows. DNA ligase that catalyzes the formation of phosphodiester linkages between 5'-phosphoryl and 3'-hydroxyl groups in double-stranded DNA using NAD as a coenzyme and as the energy source for the reaction. It is essential for DNA replication and repair of damaged DNA. The polypeptide is DNA ligase (Rhodococcus jostii (strain RHA1)).